The chain runs to 135 residues: Large ribosomal subunit protein uL16c (135 aa).

The protein belongs to the universal ribosomal protein uL16 family. As to quaternary structure, part of the 50S ribosomal subunit.

The protein resides in the plastid. It is found in the chloroplast. This is Large ribosomal subunit protein uL16c from Panax ginseng (Korean ginseng).